The primary structure comprises 388 residues: tRNA (guanine(26)-N(2))-dimethyltransferase (388 aa).

A Trm1 methyltransferase domain is found at 4-383 (RTIVEGTTKI…APIAEIKKII (380 aa)). S-adenosyl-L-methionine-binding residues include arginine 41, arginine 78, aspartate 94, and alanine 123. 4 residues coordinate Zn(2+): cysteine 251, cysteine 254, cysteine 271, and cysteine 274.

This sequence belongs to the class I-like SAM-binding methyltransferase superfamily. Trm1 family.

The catalysed reaction is guanosine(26) in tRNA + 2 S-adenosyl-L-methionine = N(2)-dimethylguanosine(26) in tRNA + 2 S-adenosyl-L-homocysteine + 2 H(+). Its function is as follows. Dimethylates a single guanine residue at position 26 of a number of tRNAs using S-adenosyl-L-methionine as donor of the methyl groups. This chain is tRNA (guanine(26)-N(2))-dimethyltransferase, found in Methanosarcina mazei (strain ATCC BAA-159 / DSM 3647 / Goe1 / Go1 / JCM 11833 / OCM 88) (Methanosarcina frisia).